Consider the following 427-residue polypeptide: MTAIVDIIGREILDSRGNPTVEVDVVLEDGSVGRAAVPSGASTGAHEAVELRDGDKRRYLGKGVQKAVEAINDEIYEALSDMSVQDQVQIDQILIELDGTENKSRLGANAILGVSLACAKAAAISYDMPLYRYVGGTSARTLPVPMMNIVNGGVHADNPIDFQEFMIMPVGAPSFAEALRCGSEIFHTLKGELKKAGHNTNVGDEGGFAPNLPSADAALDFVMAAIGKAGYTAGEDVMLALDCAATEFFKDGKYVYEGENKSRSRSEQAKYLADLVARYPICSIEDGMSEDDMDGWKELTDLIGHKCQLVGDDLFVTNVTRLEDGIRNGRANSILIKVNQIGTLTETLAAVEMAYKAGYTAVMSHRSGETEDSTIADLAVATNCGQIKTGSLARSDRTAKYNQLLRIEQELDAQAKYAGRAALKALA.

Q163 provides a ligand contact to (2R)-2-phosphoglycerate. E205 (proton donor) is an active-site residue. D242, E285, and D312 together coordinate Mg(2+). Residues K337, R366, S367, and K388 each coordinate (2R)-2-phosphoglycerate. Residue K337 is the Proton acceptor of the active site.

The protein belongs to the enolase family. It depends on Mg(2+) as a cofactor.

The protein resides in the cytoplasm. It localises to the secreted. The protein localises to the cell surface. It carries out the reaction (2R)-2-phosphoglycerate = phosphoenolpyruvate + H2O. It functions in the pathway carbohydrate degradation; glycolysis; pyruvate from D-glyceraldehyde 3-phosphate: step 4/5. Functionally, catalyzes the reversible conversion of 2-phosphoglycerate (2-PG) into phosphoenolpyruvate (PEP). It is essential for the degradation of carbohydrates via glycolysis. The protein is Enolase of Bradyrhizobium sp. (strain ORS 278).